Consider the following 415-residue polypeptide: Gamma-glutamyl phosphate reductase (415 aa).

Belongs to the gamma-glutamyl phosphate reductase family.

It is found in the cytoplasm. It catalyses the reaction L-glutamate 5-semialdehyde + phosphate + NADP(+) = L-glutamyl 5-phosphate + NADPH + H(+). It functions in the pathway amino-acid biosynthesis; L-proline biosynthesis; L-glutamate 5-semialdehyde from L-glutamate: step 2/2. In terms of biological role, catalyzes the NADPH-dependent reduction of L-glutamate 5-phosphate into L-glutamate 5-semialdehyde and phosphate. The product spontaneously undergoes cyclization to form 1-pyrroline-5-carboxylate. This chain is Gamma-glutamyl phosphate reductase, found in Bacillus mycoides (strain KBAB4) (Bacillus weihenstephanensis).